The sequence spans 334 residues: Glucokinase-like protein XF_1460 (334 aa).

18–23 (ADVGGT) contributes to the ATP binding site.

Belongs to the bacterial glucokinase family.

The protein is Glucokinase-like protein XF_1460 of Xylella fastidiosa (strain 9a5c).